Consider the following 364-residue polypeptide: METRIVFHIDFDYFYAQCEEIRSPELKSKPVCVCVFSDRGGDSGAIATANYTARKYGAKSGIPIVFAKKRLEERKDAVFLPVDFDYYSEMSEKAMKIMEEFSDVFEYVGRDEAYLDVTKRTEGDFHKASHLAQQIKNSIREKTKLSCSIGISPNKLISKIASDFQKPDGLTIVSPEKVEGFLESLKIRDIPGIGKKTEQRFTEMNLETIGDVKRLDVFTLNKEFGRKSGTYIYNAVRGIDDELVKEREPSIQHGKIVTLKKDSKDYEFLLENTLELCKEVHEIIQKKNQMFKSVGISFVQSDLSNKTKSKMLRNPTMSLEELEKTVEQLLREALENQTATIRRLGVKVSELSESQGQRDITSYF.

A UmuC domain is found at 6–194; that stretch reads VFHIDFDYFY…LKIRDIPGIG (189 aa). Residues Asp10 and Asp111 each contribute to the Mg(2+) site. Glu112 is a catalytic residue.

The protein belongs to the DNA polymerase type-Y family. In terms of assembly, monomer. It depends on Mg(2+) as a cofactor.

It is found in the cytoplasm. The enzyme catalyses DNA(n) + a 2'-deoxyribonucleoside 5'-triphosphate = DNA(n+1) + diphosphate. Poorly processive, error-prone DNA polymerase involved in untargeted mutagenesis. Copies undamaged DNA at stalled replication forks, which arise in vivo from mismatched or misaligned primer ends. These misaligned primers can be extended by PolIV. Exhibits no 3'-5' exonuclease (proofreading) activity. May be involved in translesional synthesis. This is DNA polymerase IV from Nitrosopumilus maritimus (strain SCM1).